A 320-amino-acid polypeptide reads, in one-letter code: Cytochrome f (320 aa).

The signal sequence occupies residues 1–35; sequence MQTRKTFSWIKEQITRSISASLMIYIITRTSISSA. Positions 36, 56, 59, and 60 each coordinate heme. The chain crosses the membrane as a helical span at residues 286-306; sequence VQGLLFFLASVILAQIFLVLK.

It belongs to the cytochrome f family. As to quaternary structure, the 4 large subunits of the cytochrome b6-f complex are cytochrome b6, subunit IV (17 kDa polypeptide, petD), cytochrome f and the Rieske protein, while the 4 small subunits are PetG, PetL, PetM and PetN. The complex functions as a dimer. Heme is required as a cofactor.

Its subcellular location is the plastid. The protein localises to the chloroplast thylakoid membrane. Component of the cytochrome b6-f complex, which mediates electron transfer between photosystem II (PSII) and photosystem I (PSI), cyclic electron flow around PSI, and state transitions. This chain is Cytochrome f, found in Panax ginseng (Korean ginseng).